We begin with the raw amino-acid sequence, 297 residues long: 4-hydroxy-tetrahydrodipicolinate synthase (297 aa).

Position 46 (Thr46) interacts with pyruvate. Tyr134 functions as the Proton donor/acceptor in the catalytic mechanism. Lys162 functions as the Schiff-base intermediate with substrate in the catalytic mechanism. Ile209 is a pyruvate binding site.

It belongs to the DapA family. Homotetramer; dimer of dimers.

It localises to the cytoplasm. It catalyses the reaction L-aspartate 4-semialdehyde + pyruvate = (2S,4S)-4-hydroxy-2,3,4,5-tetrahydrodipicolinate + H2O + H(+). It participates in amino-acid biosynthesis; L-lysine biosynthesis via DAP pathway; (S)-tetrahydrodipicolinate from L-aspartate: step 3/4. Its function is as follows. Catalyzes the condensation of (S)-aspartate-beta-semialdehyde [(S)-ASA] and pyruvate to 4-hydroxy-tetrahydrodipicolinate (HTPA). This chain is 4-hydroxy-tetrahydrodipicolinate synthase, found in Methanosphaera stadtmanae (strain ATCC 43021 / DSM 3091 / JCM 11832 / MCB-3).